Consider the following 93-residue polypeptide: Large ribosomal subunit protein uL23 (93 aa).

This sequence belongs to the universal ribosomal protein uL23 family. As to quaternary structure, part of the 50S ribosomal subunit. Contacts protein L29, and trigger factor when it is bound to the ribosome.

Its function is as follows. One of the early assembly proteins it binds 23S rRNA. One of the proteins that surrounds the polypeptide exit tunnel on the outside of the ribosome. Forms the main docking site for trigger factor binding to the ribosome. This Natranaerobius thermophilus (strain ATCC BAA-1301 / DSM 18059 / JW/NM-WN-LF) protein is Large ribosomal subunit protein uL23.